The following is a 979-amino-acid chain: Chromosome partition protein Smc (979 aa).

33 to 40 lines the ATP pocket; the sequence is PNGSGKSN. Residues 169 to 400 adopt a coiled-coil conformation; that stretch reads SKYKLDKEEA…INILKQQFEN (232 aa). The SMC hinge domain maps to 419-538; the sequence is DGYIGLASEL…DNVDNANRIA (120 aa). 2 coiled-coil regions span residues 572–716 and 750–818; these read ILNY…HSDS and SLDL…DKII.

This sequence belongs to the SMC family. Homodimer.

The protein localises to the cytoplasm. Functionally, required for chromosome condensation and partitioning. This chain is Chromosome partition protein Smc, found in Mesomycoplasma hyorhinis (Mycoplasma hyorhinis).